We begin with the raw amino-acid sequence, 795 residues long: METKVRKKMYKKGKFWVVATITTAMLTGIGLSSVQADEANSTQVSSELAERSQVQENTTASSSAAENQDKTEVKETPSTNPAAATVENTDQTTKVITDNAAVESKASKTKDQAATVTKTSASTPEVGQTNEKAKATKEADITTPKNTIDEYGLTEQARKIATEAGINLSSLTQKQVEALNKVKLTSDAQTGHQMTYQEFDKIAQTLIAQDERYAIPYFNAKAIKNMKAATTRDAQTGQIADLDVWDSWPVQDAKTGEVINWNGYQLVVAMMGIPNTNDNHIYLLYNKYGDNNFDHWKNAGSIFGYNETPLTQEWSGSATVNEDGSLQLFYTKVDTSDKNSNNQRLATATVNLGFDDQDVRILSVENDKVLTPEGGDGYHYQSYQQWRSTFTGADNIAMRDPHVIEDENGDRYLVFEASTGTENYQGEDQIYNFTNYGGSSAYNVKSLFRFLDDQDMYNRASWANAAIGILKLKGDKKTPEVDQFYTPLLSSTMVSDELERPNVVKLGDKYYLFTASRLNHGSNNDAWNKANEVVGDNVVMLGYVSDQLTNGYKPLNNSGVVLTASVPADWRTATYSYYAVPVAGSSDTLLMTAYMTNRNEVAGKGKNSTWAPSFLIQVLPDGTTKVLAEMTQQGDWIWDESSRTTDTVGTLDTAYLPGENDGYIDWNVIGGYGLKPHTPGQYQPTVPSTPIHTDDIISFEVSFDGHLVIKPVKVNNDSAGRIDQSRNSGGSLNVAFNVYAGGNISVKPSQKSINNTKETKKAHHVSTEKKQKKGNSFFAALLALFSAFCVSIGFK.

The N-terminal stretch at 1–36 (METKVRKKMYKKGKFWVVATITTAMLTGIGLSSVQA) is a signal peptide. Polar residues-rich tracts occupy residues 42 to 66 (TQVS…SAAE) and 112 to 130 (QAAT…GQTN). Disordered stretches follow at residues 42–83 (TQVS…NPAA) and 103–138 (ESKA…ATKE). 3 residues coordinate sucrose: Trp245, Asp246, and Ser315. Asp246 (nucleophile) is an active-site residue. Residue Asp394 participates in Ca(2+) binding. The sucrose site is built by Arg399 and Asp400. Residues Gln425, Asn464, and Asp496 each coordinate Ca(2+). Glu497 provides a ligand contact to sucrose. Glu499 (proton donor/acceptor) is an active-site residue. A sucrose-binding site is contributed by Arg517. A helical transmembrane segment spans residues 774 to 794 (GNSFFAALLALFSAFCVSIGF).

This sequence belongs to the glycosyl hydrolase 68 family.

It is found in the cell membrane. It localises to the cell surface. The catalysed reaction is [6)-beta-D-fructofuranosyl-(2-&gt;](n) alpha-D-glucopyranoside + sucrose = [6)-beta-D-fructofuranosyl-(2-&gt;](n+1) alpha-D-glucopyranoside + D-glucose. With respect to regulation, ca(2+) may play an important structural role and promote stability of levansucrase. Functionally, catalyzes the synthesis of levan, a fructose polymer, by transferring the fructosyl moiety from sucrose to a growing acceptor molecule. Also displays sucrose hydrolase activity. The polypeptide is Levansucrase (Streptococcus mutans serotype c (strain ATCC 700610 / UA159)).